Here is a 258-residue protein sequence, read N- to C-terminus: Alpha-fibrinogenase (258 aa).

A signal peptide spans 1 to 18 (MVLIRVLANLVMLHLSYG). A propeptide spanning residues 19–24 (EKSSEL) is cleaved from the precursor. Positions 25-249 (VIGGRPCNIN…YNDWIQSIIA (225 aa)) constitute a Peptidase S1 domain. Cystine bridges form between C31/C163, C50/C66, C98/C256, C142/C210, C174/C189, and C200/C225. N44 is a glycosylation site (N-linked (GlcNAc...) asparagine). Residue H65 is the Charge relay system of the active site. N79 and N101 each carry an N-linked (GlcNAc...) asparagine glycan. D110 functions as the Charge relay system in the catalytic mechanism. The active-site Charge relay system is the S204.

This sequence belongs to the peptidase S1 family. Snake venom subfamily. In terms of assembly, monomer. Post-translationally, glycosylated. Contains 8.5% of hexoses, 5.8% of hexosamines and 0.8% of sialic acids. In terms of tissue distribution, expressed by the venom gland.

It is found in the secreted. Its activity is regulated as follows. Inhibited by diisopropylfluorophosphate (DFP) and PMSF, and partially by soybean trypsin inhibitor, but not by EDTA. Its function is as follows. Degrades alpha chain of fibrinogen (FGA), and has strong caseinolytic activity. Cleaves oxidized insulin B-chain at '40-Tyr-|-Leu-41', '48-Phe-|-Phe-49' and '49-Phe-|-Tyr-50', and glucagon at the bonds '62-Tyr-|-Ser-63', 66-Leu-|-Asp-67' and '78-Leu-|-Met-79' bonds. This Macrovipera lebetinus (Levantine viper) protein is Alpha-fibrinogenase.